Consider the following 495-residue polypeptide: Fusicoccadiene 8-ol C-16 hydroxylase (495 aa).

A helical transmembrane segment spans residues 12 to 32 (VLLALIVWIGTTIIYNIYFHP). Asn-249 and Asn-317 each carry an N-linked (GlcNAc...) asparagine glycan. Cys-439 provides a ligand contact to heme.

This sequence belongs to the cytochrome P450 family. Requires heme as cofactor.

It is found in the membrane. It participates in mycotoxin biosynthesis. Functionally, cytochrome P450 monooxygenase; part of the gene cluster that mediates the biosynthesis of the diterpene glucoside brassicicene C. In the first step of the brassicicene C biosynthesis, the bifunctional diterpene synthase bsc8 that possesses both prenyl transferase and terpene cyclase activity, converts isopentenyl diphosphate and dimethylallyl diphosphate into geranylgeranyl diphosphate (GGDP) that is further converted into fusicocca-2,10(14)-diene, the first precursor for brassicicene C. Fusicocca-2,10(14)-diene is then substrate of cytochrome P450 monooxygenase bsc1 for hydroxylation at the C-8 position. Oxidation at C-16 position to aldehyde is then catalyzed by the cytochrome P450 monooyxygenase bsc7, yielding fusicocca-2,10(14)-diene-8-beta,16-diol. Follows the isomerization of the double bond and reduction of aldehyde to alcohol catalyzed by the short-chain dehydrogenase/reductase bsc3 to yield the diol compound fusicocca-1,10(14)-diene-8 beta,16-diol. The next step is the oxidation at the C-3 position of fusicocca-2,10(14)-diene-8-beta,16-diol catalyzed by the alpha-ketoglutarate dependent dioxygenase bsc9, to produce a triol compound. Methylation of the hydroxy group at position 16 is performed by the methyltransferase bsc6. 16-O-methylation is followed by oxidation at the C-13 position to ketone and an alkyl shift of the methyl group leads to brassicicene C. Although the probable acetyltransferase bsc4 is included in the gene cluster, no acetylation reactions are necessary for brassicicene C biosynthesis. However, the fact that brassicicene E, which is a structurally related compound having an acetoxy group at position 12, was previously isolated from another strain of A.brassicicola suggests that the ATCC 96836 strain might also produce a small amount of brassicicene E. The polypeptide is Fusicoccadiene 8-ol C-16 hydroxylase (Alternaria brassicicola (Dark leaf spot agent)).